The primary structure comprises 392 residues: ATP phosphoribosyltransferase regulatory subunit (392 aa).

This sequence belongs to the class-II aminoacyl-tRNA synthetase family. HisZ subfamily. As to quaternary structure, heteromultimer composed of HisG and HisZ subunits.

It is found in the cytoplasm. Its pathway is amino-acid biosynthesis; L-histidine biosynthesis; L-histidine from 5-phospho-alpha-D-ribose 1-diphosphate: step 1/9. In terms of biological role, required for the first step of histidine biosynthesis. May allow the feedback regulation of ATP phosphoribosyltransferase activity by histidine. This Prochlorococcus marinus (strain MIT 9303) protein is ATP phosphoribosyltransferase regulatory subunit.